A 534-amino-acid chain; its full sequence is Prolyl 4-hydroxylase subunit alpha-2 (534 aa).

The signal sequence occupies residues 1 to 21 (MKPWLCLVFFTSAFLIWHAEA). N115 is a glycosylation site (N-linked (GlcNAc...) asparagine). The TPR repeat unit spans residues 207-240 (VEILDYLSYAVFQFGDLHRAMELTRRLISLDSTH). Residue N263 is glycosylated (N-linked (GlcNAc...) asparagine). Residues 413–519 (TAELLQVANY…KWVSNKWFHE (107 aa)) enclose the Fe2OG dioxygenase domain. H431, D433, and H500 together coordinate Fe cation. K510 contributes to the 2-oxoglutarate binding site.

It belongs to the P4HA family. As to quaternary structure, heterotetramer of two alpha-2 chains and two beta chains (the beta chain is the multi-functional PDI). It depends on Fe(2+) as a cofactor. The cofactor is L-ascorbate.

Its subcellular location is the endoplasmic reticulum lumen. The enzyme catalyses L-prolyl-[collagen] + 2-oxoglutarate + O2 = trans-4-hydroxy-L-prolyl-[collagen] + succinate + CO2. Functionally, catalyzes the post-translational formation of 4-hydroxyproline in -Xaa-Pro-Gly- sequences in collagens and other proteins. The chain is Prolyl 4-hydroxylase subunit alpha-2 (P4HA2) from Gallus gallus (Chicken).